A 257-amino-acid polypeptide reads, in one-letter code: 3-methyl-2-oxobutanoate hydroxymethyltransferase (257 aa).

Asp-42 and Asp-86 together coordinate Mg(2+). Residues 42–43, Asp-86, and Lys-116 each bind 3-methyl-2-oxobutanoate; that span reads DS. Residue Glu-118 participates in Mg(2+) binding. The active-site Proton acceptor is Glu-185.

This sequence belongs to the PanB family. As to quaternary structure, homodecamer; pentamer of dimers. Requires Mg(2+) as cofactor.

It localises to the cytoplasm. The catalysed reaction is 3-methyl-2-oxobutanoate + (6R)-5,10-methylene-5,6,7,8-tetrahydrofolate + H2O = 2-dehydropantoate + (6S)-5,6,7,8-tetrahydrofolate. It functions in the pathway cofactor biosynthesis; (R)-pantothenate biosynthesis; (R)-pantoate from 3-methyl-2-oxobutanoate: step 1/2. In terms of biological role, catalyzes the reversible reaction in which hydroxymethyl group from 5,10-methylenetetrahydrofolate is transferred onto alpha-ketoisovalerate to form ketopantoate. This Prochlorococcus marinus (strain MIT 9215) protein is 3-methyl-2-oxobutanoate hydroxymethyltransferase.